The sequence spans 523 residues: Inosine-5'-monophosphate dehydrogenase 2 (523 aa).

CBS domains are found at residues 121 to 183 and 184 to 240; these read FINN…VQDV and MTKN…PLAS. Residues 278 to 280 and 328 to 330 contribute to the NAD(+) site; these read DSS and GMG. Positions 330 and 332 each coordinate K(+). Position 333 (S333) interacts with IMP. C335 is a K(+) binding site. The active-site Thioimidate intermediate is C335. Residues 368-370, 391-392, and 415-419 contribute to the IMP site; these read DGG, GG, and YRGMG. R437 (proton acceptor) is an active-site residue. Q449 contacts IMP. The K(+) site is built by E508, G509, and G510.

Belongs to the IMPDH/GMPR family. As to quaternary structure, homotetramer. Seems to be able to form heterotetramers composed from more than 1 of the 3 IMPDH gene products (IMD2-4). It depends on K(+) as a cofactor.

Its subcellular location is the cytoplasm. It catalyses the reaction IMP + NAD(+) + H2O = XMP + NADH + H(+). It functions in the pathway purine metabolism; XMP biosynthesis via de novo pathway; XMP from IMP: step 1/1. Its activity is regulated as follows. Mycophenolic acid (MPA) is a non-competitive inhibitor that prevents formation of the closed enzyme conformation by binding to the same site as the amobile flap. In contrast, mizoribine monophosphate (MZP) is a competitive inhibitor that induces the closed conformation. MPA is a potent inhibitor of mammalian IMPDHs but a poor inhibitor of the bacterial enzymes. MZP is a more potent inhibitor of bacterial IMPDH. Its function is as follows. Catalyzes the conversion of inosine 5'-phosphate (IMP) to xanthosine 5'-phosphate (XMP), the first committed and rate-limiting step in the de novo synthesis of guanine nucleotides, and therefore plays an important role in the regulation of cell growth. In contrast to the other IMPDH alleles IMD3 and IMD4, the enzymatic activity of IMD2 seems to be intrinsically drug resistant. This is Inosine-5'-monophosphate dehydrogenase 2 from Saccharomyces cerevisiae (strain ATCC 204508 / S288c) (Baker's yeast).